Consider the following 93-residue polypeptide: Corticostatin 1 (93 aa).

A signal peptide spans 1-19; it reads MRTLILLAAILLAALQAQA. A propeptide spanning residues 20–59 is cleaved from the precursor; sequence ELFSVNVDEVLDQQQPGSDQDLVIHLTGEESSALQVPDTK. Cystine bridges form between Cys62–Cys90, Cys64–Cys79, and Cys69–Cys89.

Belongs to the alpha-defensin family.

The protein resides in the secreted. Microbicidal activity and inhibits corticotropin (ACTH) stimulated corticosterone production. This is Corticostatin 1 from Oryctolagus cuniculus (Rabbit).